A 294-amino-acid chain; its full sequence is uncharacterized protein (294 aa).

It localises to the mitochondrion. This is an uncharacterized protein from Zea mays (Maize).